We begin with the raw amino-acid sequence, 321 residues long: Cytochrome f (321 aa).

The signal sequence occupies residues 1 to 35 (MQNRKTYDDWVKKWITQSISVLIMIDIMTRTSIAN). Residues Tyr-37, Cys-57, Cys-60, and His-61 each coordinate heme. The helical transmembrane segment at 287 to 307 (VQGLLLFLASVVLAQIFLVLK) threads the bilayer.

Belongs to the cytochrome f family. As to quaternary structure, the 4 large subunits of the cytochrome b6-f complex are cytochrome b6, subunit IV (17 kDa polypeptide, petD), cytochrome f and the Rieske protein, while the 4 small subunits are PetG, PetL, PetM and PetN. The complex functions as a dimer. Requires heme as cofactor.

Its subcellular location is the plastid. The protein localises to the chloroplast thylakoid membrane. Component of the cytochrome b6-f complex, which mediates electron transfer between photosystem II (PSII) and photosystem I (PSI), cyclic electron flow around PSI, and state transitions. This is Cytochrome f from Cryptomeria japonica (Japanese cedar).